Here is a 177-residue protein sequence, read N- to C-terminus: Large ribosomal subunit protein uL6 (177 aa).

The protein belongs to the universal ribosomal protein uL6 family. Part of the 50S ribosomal subunit.

Functionally, this protein binds to the 23S rRNA, and is important in its secondary structure. It is located near the subunit interface in the base of the L7/L12 stalk, and near the tRNA binding site of the peptidyltransferase center. This Histophilus somni (strain 129Pt) (Haemophilus somnus) protein is Large ribosomal subunit protein uL6.